A 238-amino-acid chain; its full sequence is Serine protease SplE (238 aa).

A signal peptide spans 1–36; sequence MNKNIIIKSIAALTILTSVTGVGTTMVEGIQQTAKA. Residues His75, Asp113, and Ser191 each act as charge relay system in the active site.

The protein belongs to the peptidase S1B family.

The protein resides in the secreted. In Staphylococcus aureus, this protein is Serine protease SplE (splE).